A 757-amino-acid polypeptide reads, in one-letter code: MMKRRWSNNGGFAALKMLEESSSEVTSSSNGLVLSSDINMSPSSLDSPVYGDQEMWLCNDSASYNNSHQHSVITSLQGCTSSLPAQTTIIPLSALPNSNNASLNNQNQNYQNGNSMNTNLSVNTNNSVGGGGGGGGVPGMTSLNGLGGGGGSQVNNHNHSHNHLHHNSNSNHSNSSSHHTNGHMGIGGGGGGLSVNINGPNIVSNAQQLNSLQASQNGQVIHANIGIHSIISNGLNHHHHHHMNNSSMMHHTPRSESANSISSGRDDLSPSSSLNGFSTSDASDVKKIKKGPAPRLQEELCLVCGDRASGYHYNALTCEGCKGFFRRSVTKNAVYCCKFGHACEMDMYMRRKCQECRLKKCLAVGMRPECVVPENQCAMKRREKKAQKEKDKIQTSVCATEIKKEILDLMTCEPPSHPTCPLLPEDILAKCQARNIPPLSYNQLAVIYKLIWYQDGYEQPSEEDLKRIMSSPDENESQHDASFRHITEITILTVQLIVEFAKGLPAFTKIPQEDQITLLKACSSEVMMLRMARRYDHNSDSIFFANNRSYTRDSYKMAGMADNIEDLLHFCRQMYSMKVDNVEYALLTAIVIFSDRPGLEEAELVEAIQSYYIDTLRIYILNRHCGDPMSLVFFAKLLSILTELRTLGNQNAEMCFSLKLKNRKLPKFLEEIWDVHAIPPSVQSHIQATQAEKAAQEAQATTSAISAAATSSSSINTSMATSSSSSLSPSAASTPNGGAVDYVGTDMSMSLVQSDNA.

The segment at 1–300 is modulating; that stretch reads MMKRRWSNNG…GPAPRLQEEL (300 aa). 2 disordered regions span residues 126–192 and 235–289; these read NSVG…GGGG and LNHH…KKIK. Residues 128–138 are compositionally biased toward gly residues; sequence VGGGGGGGGVP. Residues 167 to 183 show a composition bias toward low complexity; the sequence is NSNSNHSNSSSHHTNGH. 2 NR C4-type zinc fingers span residues 301-321 and 337-361; these read CLVC…CEGC and CKFG…LKKC. A DNA-binding region (nuclear receptor) is located at residues 301–373; that stretch reads CLVCGDRASG…VGMRPECVVP (73 aa). One can recognise an NR LBD domain in the interval 442–677; sequence NQLAVIYKLI…FLEEIWDVHA (236 aa). The segment covering 717 to 734 has biased composition (low complexity); it reads TSMATSSSSSLSPSAAST. The tract at residues 717-739 is disordered; the sequence is TSMATSSSSSLSPSAASTPNGGA.

Belongs to the nuclear hormone receptor family. NR1 subfamily.

Its subcellular location is the nucleus. Functionally, receptor for ecdysone. Binds to ecdysone response elements (ECRES). The polypeptide is Ecdysone receptor (EcR) (Lucilia cuprina (Green bottle fly)).